Reading from the N-terminus, the 386-residue chain is Epoxyqueuosine reductase (386 aa).

Cob(II)alamin-binding positions include Arg-57, Cys-97, Asp-134, 139–141, Ser-152, Asn-155, Ile-158, and Leu-169; that span reads SDR. Asp-134 acts as the Proton donor in catalysis. Residues 178-208 enclose the 4Fe-4S ferredoxin-type domain; sequence FEPDVPIEDMCGSCTKCLDACPTGALVNPGQ. Residues Cys-188, Cys-191, Cys-194, Cys-198, and Cys-214 each contribute to the [4Fe-4S] cluster site. Residue Ser-216 participates in cob(II)alamin binding. Residues Gln-220 and Lys-222 each coordinate tRNA. 3 residues coordinate [4Fe-4S] cluster: Cys-240, Cys-243, and Cys-247. 240–241 provides a ligand contact to cob(II)alamin; the sequence is CD. The tRNA site is built by Asn-280, Arg-281, Arg-295, Lys-297, and Lys-298. The HEAT-like PBS-type repeat unit spans residues 333–357; that stretch reads RGTAAWAIGKIGDPAYAEELEKALE.

It belongs to the QueG family. Monomer. Cob(II)alamin is required as a cofactor. [4Fe-4S] cluster serves as cofactor.

The protein resides in the cytoplasm. The catalysed reaction is epoxyqueuosine(34) in tRNA + AH2 = queuosine(34) in tRNA + A + H2O. Its pathway is tRNA modification; tRNA-queuosine biosynthesis. In terms of biological role, catalyzes the conversion of epoxyqueuosine (oQ) to queuosine (Q), which is a hypermodified base found in the wobble positions of tRNA(Asp), tRNA(Asn), tRNA(His) and tRNA(Tyr). This is Epoxyqueuosine reductase from Bacillus subtilis (strain 168).